The following is a 187-amino-acid chain: Large ribosomal subunit protein uL5 (187 aa).

The protein belongs to the universal ribosomal protein uL5 family. In terms of assembly, part of the 50S ribosomal subunit; part of the 5S rRNA/L5/L18/L25 subcomplex. Contacts the 5S rRNA and the P site tRNA. Forms a bridge to the 30S subunit in the 70S ribosome.

Functionally, this is one of the proteins that bind and probably mediate the attachment of the 5S RNA into the large ribosomal subunit, where it forms part of the central protuberance. In the 70S ribosome it contacts protein S13 of the 30S subunit (bridge B1b), connecting the 2 subunits; this bridge is implicated in subunit movement. Contacts the P site tRNA; the 5S rRNA and some of its associated proteins might help stabilize positioning of ribosome-bound tRNAs. The chain is Large ribosomal subunit protein uL5 from Mycolicibacterium smegmatis (strain ATCC 700084 / mc(2)155) (Mycobacterium smegmatis).